A 586-amino-acid chain; its full sequence is Lamin-B1 (586 aa).

The interval 1-31 (MATATPVPPRMGSRAGGPTTPLSPTRLSRLQ) is disordered. A2 is subject to N-acetylalanine. The interval 2–34 (ATATPVPPRMGSRAGGPTTPLSPTRLSRLQEKE) is head. A phosphothreonine mark is found at T3 and T5. R14 is modified (omega-N-methylarginine). T20 bears the Phosphothreonine mark. The residue at position 23 (S23) is a Phosphoserine. Phosphothreonine is present on T25. S28 carries the phosphoserine modification. In terms of domain architecture, IF rod spans 32–388 (EKEELRELND…KLLEGEEERL (357 aa)). Residues 35–69 (ELRELNDRLAVYIDKVRSLETENSALQLQVTEREE) form a coil 1A region. The interval 70 to 81 (VRGRELTGLKAL) is linker 1. Residues 82 to 215 (YETELADARR…EFRKSMYEEE (134 aa)) form a coil 1B region. Residue K102 forms a Glycyl lysine isopeptide (Lys-Gly) (interchain with G-Cter in SUMO2) linkage. Residue K111 is modified to N6-acetyllysine. Residue K123 forms a Glycyl lysine isopeptide (Lys-Gly) (interchain with G-Cter in SUMO2) linkage. S126 carries the phosphoserine modification. A Glycyl lysine isopeptide (Lys-Gly) (interchain with G-Cter in SUMO2) cross-link involves residue K145. K157 is modified (N6-acetyllysine; alternate). Residue K157 forms a Glycyl lysine isopeptide (Lys-Gly) (interchain with G-Cter in SUMO2); alternate linkage. S158 is modified (phosphoserine). Residue K181 forms a Glycyl lysine isopeptide (Lys-Gly) (interchain with G-Cter in SUMO2) linkage. S200, S210, and S232 each carry phosphoserine. Residues 216–243 (INETRRKHETRLVEVDSGRQIEYEYKLA) form a linker 2 region. Glycyl lysine isopeptide (Lys-Gly) (interchain with G-Cter in SUMO2) cross-links involve residues K241 and K261. The segment at 244–386 (QALHEMREQH…YRKLLEGEEE (143 aa)) is coil 2. K271 carries the post-translational modification N6-acetyllysine; alternate. K271 participates in a covalent cross-link: Glycyl lysine isopeptide (Lys-Gly) (interchain with G-Cter in SUMO2); alternate. Phosphoserine is present on residues S278 and S302. K312 is covalently cross-linked (Glycyl lysine isopeptide (Lys-Gly) (interchain with G-Cter in SUMO2)). An N6-acetyllysine; alternate modification is found at K330. Residue K330 forms a Glycyl lysine isopeptide (Lys-Gly) (interchain with G-Cter in SUMO2); alternate linkage. S375 and S393 each carry phosphoserine. Residues 387 to 586 (RLKLSPSPSS…RASNRSCAIM (200 aa)) are tail. The interval 388 to 432 (LKLSPSPSSRVTVSRASSSRSVRTTRGKRKRVDVEESEASSSVSI) is disordered. Positions 390–409 (LSPSPSSRVTVSRASSSRSV) are enriched in low complexity. O-linked (GlcNAc) threonine glycosylation is present at T399. Position 413 is an omega-N-methylarginine (R413). The Nuclear localization signal signature appears at 415–420 (KRKRVD). One can recognise an LTD domain in the interval 430–546 (VSISHSASAT…EEVAQRSTVF (117 aa)). K483 carries the N6-acetyllysine modification. Residue K532 forms a Glycyl lysine isopeptide (Lys-Gly) (interchain with G-Cter in SUMO2) linkage. S534 carries the post-translational modification Phosphoserine. K547 participates in a covalent cross-link: Glycyl lysine isopeptide (Lys-Gly) (interchain with G-Cter in SUMO2). T575 is modified (phosphothreonine). Residue C583 is modified to Cysteine methyl ester. C583 carries the S-farnesyl cysteine lipid modification. Positions 584–586 (AIM) are cleaved as a propeptide — removed in mature form.

The protein belongs to the intermediate filament family. In terms of assembly, homodimer. Lamin dimers then assemble into dimeric head-to-tail polymers. Ultimately, two head-to-tail polymers assemble laterally into a protofilament with a uniformly shaped rod of 3.5 nm in diameter. Interacts with SPAG4 and SEPT12. In terms of processing, B-type lamins undergo a series of modifications, such as farnesylation and phosphorylation. Increased phosphorylation of the lamins occurs before envelope disintegration and probably plays a role in regulating lamin associations. Post-translationally, phosphorylation plays a key role in lamin organization, subcellular localization and nuclear envelope disintegration. Phosphorylation by CDK1 at Ser-23 and Ser-393 at the onset of mitosis drives lamin disassembly and nuclear envelope breakdown.

The protein localises to the nucleus lamina. Functionally, lamins are intermediate filament proteins that assemble into a filamentous meshwork, and which constitute the major components of the nuclear lamina, a fibrous layer on the nucleoplasmic side of the inner nuclear membrane. Lamins provide a framework for the nuclear envelope, bridging the nuclear envelope and chromatin, thereby playing an important role in nuclear assembly, chromatin organization, nuclear membrane and telomere dynamics. The structural integrity of the lamina is strictly controlled by the cell cycle, as seen by the disintegration and formation of the nuclear envelope in prophase and telophase, respectively. The sequence is that of Lamin-B1 (LMNB1) from Homo sapiens (Human).